The following is a 429-amino-acid chain: Serine--tRNA ligase (429 aa).

229 to 231 lines the L-serine pocket; the sequence is TAE. 260–262 serves as a coordination point for ATP; it reads RSE. An L-serine-binding site is contributed by Glu283. Residue 347 to 350 participates in ATP binding; sequence EISS. Residue Ser383 participates in L-serine binding.

It belongs to the class-II aminoacyl-tRNA synthetase family. Type-1 seryl-tRNA synthetase subfamily. As to quaternary structure, homodimer. The tRNA molecule binds across the dimer.

The protein localises to the cytoplasm. The enzyme catalyses tRNA(Ser) + L-serine + ATP = L-seryl-tRNA(Ser) + AMP + diphosphate + H(+). It catalyses the reaction tRNA(Sec) + L-serine + ATP = L-seryl-tRNA(Sec) + AMP + diphosphate + H(+). The protein operates within aminoacyl-tRNA biosynthesis; selenocysteinyl-tRNA(Sec) biosynthesis; L-seryl-tRNA(Sec) from L-serine and tRNA(Sec): step 1/1. Functionally, catalyzes the attachment of serine to tRNA(Ser). Is also able to aminoacylate tRNA(Sec) with serine, to form the misacylated tRNA L-seryl-tRNA(Sec), which will be further converted into selenocysteinyl-tRNA(Sec). This Orientia tsutsugamushi (strain Boryong) (Rickettsia tsutsugamushi) protein is Serine--tRNA ligase.